A 290-amino-acid polypeptide reads, in one-letter code: MAATFFGEVVKAPCRAGTEDEEEEEEEEGRRETPEDREVRQQLARKREVRLLRRQTKTSLEVSLLEKYPCSKFIIAIGNNAVAFLSSFVMNSGVWEEVGCAKLWNEWCRTADTTHLSSTEAFCGFYHLKSNPSVFLCQCSCYVAEDQQYQWLEKVFGSCPRKNMQITILTCRHVTDYKTLESTGSLPSPFLKALKTQNFKDPACCPLLEQPNIVHDLPAAVLSYCQVWKIPAILYLCYTDVMKLDLITVEAFKPILSTRSLKGLVKNISQSTEILKKLMTTNEIQSNIYT.

The segment at M1–V39 is disordered. The residue at position 2 (A2) is an N-acetylalanine. T18 is modified (phosphothreonine). The segment covering E28–V39 has biased composition (basic and acidic residues). T56 carries the phosphothreonine modification. Residue S182 is modified to Phosphoserine. K266 carries the post-translational modification N6-acetyllysine.

Belongs to the PSMG1 family. In terms of assembly, forms a heterodimer with PSMG2. The PSMG1-PSMG2 heterodimer interacts directly with the PSMA5 and PSMA7 proteasome alpha subunits. In terms of processing, degraded by the proteasome upon completion of 20S proteasome maturation.

Its subcellular location is the cytoplasm. The protein localises to the endoplasmic reticulum. In terms of biological role, chaperone protein which promotes assembly of the 20S proteasome as part of a heterodimer with PSMG2. The PSMG1-PSMG2 heterodimer binds to the PSMA5 and PSMA7 proteasome subunits, promotes assembly of the proteasome alpha subunits into the heteroheptameric alpha ring and prevents alpha ring dimerization. This chain is Proteasome assembly chaperone 1 (PSMG1), found in Papio anubis (Olive baboon).